The chain runs to 229 residues: 7-cyano-7-deazaguanine synthase (229 aa).

Position 9-19 (9-19 (YSGGLDSTTCM)) interacts with ATP. Residues C189, C199, C202, and C205 each contribute to the Zn(2+) site.

This sequence belongs to the QueC family. The cofactor is Zn(2+).

It catalyses the reaction 7-carboxy-7-deazaguanine + NH4(+) + ATP = 7-cyano-7-deazaguanine + ADP + phosphate + H2O + H(+). It participates in purine metabolism; 7-cyano-7-deazaguanine biosynthesis. Catalyzes the ATP-dependent conversion of 7-carboxy-7-deazaguanine (CDG) to 7-cyano-7-deazaguanine (preQ(0)). The sequence is that of 7-cyano-7-deazaguanine synthase from Geotalea daltonii (strain DSM 22248 / JCM 15807 / FRC-32) (Geobacter daltonii).